The sequence spans 444 residues: Pentatricopeptide repeat-containing protein At4g35850, mitochondrial (444 aa).

The transit peptide at 1-25 directs the protein to the mitochondrion; it reads MKFLMQSISGRNRSLVRALVSRRYF. PPR repeat units lie at residues 40 to 74, 75 to 109, 110 to 144, 145 to 179, 255 to 289, and 290 to 325; these read DLSE…GVQP, TADI…GIAP, DVNL…DVKP, NGQT…GVGL, NLTV…GKDT, and DTYC…KIPA.

This sequence belongs to the PPR family. P subfamily.

Its subcellular location is the mitochondrion. In Arabidopsis thaliana (Mouse-ear cress), this protein is Pentatricopeptide repeat-containing protein At4g35850, mitochondrial.